The chain runs to 342 residues: Serpentine receptor class gamma-69 (342 aa).

The next 7 helical transmembrane spans lie at 11-31, 51-71, 106-126, 140-160, 191-211, 222-242, and 269-289; these read MAGL…SVVV, SLLY…HFLI, PIAI…IVAA, LFVL…IPCK, IAAV…LIAL, AEIS…IYAF, and FAID…STTV.

The protein belongs to the nematode receptor-like protein srg family.

The protein resides in the membrane. The polypeptide is Serpentine receptor class gamma-69 (srg-69) (Caenorhabditis elegans).